A 299-amino-acid polypeptide reads, in one-letter code: B-box zinc finger protein 22 (299 aa).

C5, C8, C28, H33, C57, C60, C80, and H85 together coordinate Zn(2+). The B box-type 1; atypical zinc finger occupies 5 to 47 (CNVCEAAEATVLCCADEAALCWACDEKIHAANKLAGKHQRVPL). The segment at 57-99 (CDICQEASGFFFCLQDRALLCRKCDVAIHTVNPHVSAHQRFLL) adopts a B box-type 2; atypical zinc-finger fold. 2 disordered regions span residues 143–181 (FDHH…GSTT) and 206–299 (ENNG…RRRF). Composition is skewed to polar residues over residues 164–181 (VNDQ…GSTT), 251–260 (QIQSPPTASG), and 277–290 (ITSS…SPNQ).

As to quaternary structure, interacts with HY5. Post-translationally, ubiquitinated by COP1 in vitro. COP1-mediated degradation of BBX22 by the proteasome occurs in the dark and is important for a precise skotomorphogenesis process and optimization of seedling growth under short days conditions.

The protein localises to the nucleus. In terms of biological role, acts as a positive regulator of seedling photomorphogenesis and light-regulated inhibition of hypocotyl elongation, independently and in concert with HY5 and BBX21. Acts as a positive regulator of de-etiolation and influences chloroplast biogenesis and function through regulation of genes encoding chloroplast proteins. Acts downstream of COP1 and plays an important role in early and long-term adjustment of the shade avoidance syndrome (SAS) responses in natural environments. Regulates the expression of genes responsive to light hormone signals which may contribute to optimal seedling development. The protein is B-box zinc finger protein 22 of Arabidopsis thaliana (Mouse-ear cress).